Consider the following 1070-residue polypeptide: Ubiquitin-protein ligase E3B (1070 aa).

N-acetylmethionine is present on M1. The 30-residue stretch at 29–58 (RERSAVTIQALVRSFLCRRRLHRDIRKEID) folds into the IQ domain. S421 is modified (phosphoserine). An HECT domain is found at 704-1070 (SQHAMKGVIR…ISMNTGFELS (367 aa)). C1038 (glycyl thioester intermediate) is an active-site residue.

As to expression, widely expressed. High expression is observed in developing central nervous system.

Its subcellular location is the postsynaptic density. It catalyses the reaction S-ubiquitinyl-[E2 ubiquitin-conjugating enzyme]-L-cysteine + [acceptor protein]-L-lysine = [E2 ubiquitin-conjugating enzyme]-L-cysteine + N(6)-ubiquitinyl-[acceptor protein]-L-lysine.. Its pathway is protein modification; protein ubiquitination. Its function is as follows. E3 ubiquitin-protein ligase which accepts ubiquitin from an E2 ubiquitin-conjugating enzyme in the form of a thioester and then directly transfers the ubiquitin to targeted substrates. Ubiquitinates BCKDK and targets it for degradation, thereby regulating various metabolic processes. Involved in the positive regulation of neurite branching in hippocampal neurons and the control of neuronal spine number and morphology, through the ubiquitination of PPP3CC. The protein is Ubiquitin-protein ligase E3B (Ube3b) of Mus musculus (Mouse).